The following is a 522-amino-acid chain: MKGFLLVALPVLFLSLSTQVFGEPSIPSAAQIVQNANRLLAEGSYSAAARAYGEAIELDPTGYANYYKRATAYLSMGRHNAALDDFEQILRINPGFVQAHYQRAKILAKEGDFAKAQYELKAYVRTKSDSEAEELSHLLTVGEAAEKSALQAFEKGKWQVCVEHSTKALEVGPNSEKLRRLRVNCATELGDINMVYGDLSRLASLDPSTTYLPLQLSNIAYFIRASSQAAAHIKQCLHFDPDSKPCKAVHKTIRSLEKDAARVRNFIESGTYRQAIKILDGDDGLLVRFEKALDDATKPKDGLPPYLAPQFHPKKNSQMRLDLYALACKASVMANDFGEKGAHWCEETMSMNEENVDSWISRGERLLRVEKWEEAMRAVEKAFELSGRSQDILPRVQKAQRLLKQSKQKDYYKVLGVPRDADERAIKKAFRKAAKLAHPDVGGSEEKMAALNEAYEVLSNTELRQRYDNGDDPNDPTGGQQHNPFAHHGGGMPFQFFQQGGGFQGFHQGFPGGGQKMHFQWN.

Positions 1–22 (MKGFLLVALPVLFLSLSTQVFG) are cleaved as a signal peptide. TPR repeat units lie at residues 29–62 (AAQI…DPTG), 63–96 (YANY…NPGF), 97–130 (VQAH…KSDS), 142–175 (GEAA…GPNS), 210–243 (TYLP…DPDS), 256–289 (LEKD…LVRF), and 356–389 (VDSW…SGRS). The region spanning 410 to 471 (DYYKVLGVPR…ELRQRYDNGD (62 aa)) is the J domain. The segment at 465-494 (QRYDNGDDPNDPTGGQQHNPFAHHGGGMPF) is disordered.

Its subcellular location is the endoplasmic reticulum lumen. Endoplasmic reticulum co-chaperone crucial for survival and virulence factor production at elevated temperatures representative of febrile patients during infection. Contributes to virulence in a mouse model of cryptococcosis. With chaperone CNE1, coordinately maintains ER homeostasis and contributes to maintenance of cell wall architecture. The protein is Tetratricopeptide repeat and J domain-containing co-chaperone DNJ1 of Cryptococcus neoformans var. grubii serotype A (strain H99 / ATCC 208821 / CBS 10515 / FGSC 9487) (Filobasidiella neoformans var. grubii).